The sequence spans 264 residues: MPLVDPVTMSTPSTPAKAMGKSLPNTVKDPSPPPKAGSHTRSPVESPSNSYYIAASIPALQLQIFVLLWKRLVDDPVATMSRLILPVMALIQVFYAVVLLPVAGSGKQWRKPRPGEKKKAQGGEPNIALATLLSLLLTLIATPPIHALMVLFGAPFLTHAPHTFLCALNLSLLTLFPLFYTRGAEASAWRALAGFTAPIDESVGGLVGACFGAWLGAVPIPLDWDRDWQRWPVTVLTGIYVGYAIGSYGGRTLLRIRGYSAKRS.

Positions 1–45 are disordered; sequence MPLVDPVTMSTPSTPAKAMGKSLPNTVKDPSPPPKAGSHTRSPVE. 6 helical membrane passes run 49-69, 83-103, 132-152, 160-180, 202-222, and 233-253; these read NSYY…VLLW, LILP…LPVA, LLSL…MVLF, APHT…PLFY, SVGG…PIPL, and VTVL…GRTL.

The protein belongs to the PIGF family.

It is found in the endoplasmic reticulum membrane. It functions in the pathway glycolipid biosynthesis; glycosylphosphatidylinositol-anchor biosynthesis. Functionally, acts in the GPI biosynthetic pathway between GlcNAc-PI synthesis and GPI transfer to protein. This is Glycosylphosphatidylinositol anchor biosynthesis protein 11 (GPI11) from Pyricularia oryzae (strain 70-15 / ATCC MYA-4617 / FGSC 8958) (Rice blast fungus).